The sequence spans 597 residues: Arginine--tRNA ligase (597 aa).

A 'HIGH' region motif is present at residues 125–135 (PNTNKPLHLGH).

Belongs to the class-I aminoacyl-tRNA synthetase family. Monomer.

The protein resides in the cytoplasm. The enzyme catalyses tRNA(Arg) + L-arginine + ATP = L-arginyl-tRNA(Arg) + AMP + diphosphate. This chain is Arginine--tRNA ligase, found in Bacteroides fragilis (strain ATCC 25285 / DSM 2151 / CCUG 4856 / JCM 11019 / LMG 10263 / NCTC 9343 / Onslow / VPI 2553 / EN-2).